The chain runs to 454 residues: Epoxide hydrolase 1 (454 aa).

The chain crosses the membrane as a helical span at residues 1–21 (MWLEILLASVLGFVIYWFVSK). Over 22–454 (DKEETLLLGD…RKFMGLLEQQ (433 aa)) the chain is Cytoplasmic. Catalysis depends on D226, which acts as the Nucleophile. At R294 the chain carries Dimethylated arginine. The Proton donor role is filled by Y373. H430 serves as the catalytic Proton acceptor.

The protein belongs to the peptidase S33 family.

Its subcellular location is the microsome membrane. The protein localises to the endoplasmic reticulum membrane. The enzyme catalyses cis-stilbene oxide + H2O = (1R,2R)-hydrobenzoin. The catalysed reaction is 1-(4-methoxyphenyl)-N-methyl-N-[(3-methyloxetan-3-yl)methyl]methanamine + H2O = 2-{[(4-methoxybenzyl)(methyl)amino]methyl}-2-methylpropane-1,3-diol. It carries out the reaction 8,9-epoxy-(5Z,11Z,14Z)-eicosatrienoate + H2O = 8,9-dihydroxy-(5Z,11Z,14Z)-eicosatrienoate. It catalyses the reaction 11,12-epoxy-(5Z,8Z,14Z)-eicosatrienoate + H2O = 11,12-dihydroxy-(5Z,8Z,14Z)-eicosatrienoate. The enzyme catalyses 2-(5Z,8Z,11Z,14Z-eicosatetraenoyl)-glycerol + H2O = glycerol + (5Z,8Z,11Z,14Z)-eicosatetraenoate + H(+). Inhibited by 10-hydroxystearamide and methoxy-arachidonyl fluorophosphate. In terms of biological role, biotransformation enzyme that catalyzes the hydrolysis of arene and aliphatic epoxides to less reactive and more water soluble dihydrodiols by the trans addition of water. May play a role in the metabolism of endogenous lipids such as epoxide-containing fatty acids. Metabolizes the abundant endocannabinoid 2-arachidonoylglycerol (2-AG) to free arachidonic acid (AA) and glycerol. Binds 20(S)-hydroxycholesterol (20(S)-OHC). The sequence is that of Epoxide hydrolase 1 (EPHX1) from Sus scrofa (Pig).